A 333-amino-acid polypeptide reads, in one-letter code: 6-phosphogluconolactonase (333 aa).

It belongs to the cycloisomerase 2 family.

It carries out the reaction 6-phospho-D-glucono-1,5-lactone + H2O = 6-phospho-D-gluconate + H(+). The protein operates within carbohydrate degradation; pentose phosphate pathway; D-ribulose 5-phosphate from D-glucose 6-phosphate (oxidative stage): step 2/3. Its function is as follows. Catalyzes the hydrolysis of 6-phosphogluconolactone to 6-phosphogluconate. In Buchnera aphidicola subsp. Schizaphis graminum (strain Sg), this protein is 6-phosphogluconolactonase.